Reading from the N-terminus, the 50-residue chain is Mast cell degranulating peptide (50 aa).

Residues 1–27 form the signal peptide; that stretch reads MISMLRCTFFFLSVILITSYFVTPTMS. Lys29 carries the N6-formyllysine; partial modification. 2 disulfides stabilise this stretch: Cys30–Cys42 and Cys32–Cys46. 2 positions are modified to N6-formyllysine; partial: Lys44 and Lys48. The residue at position 49 (Asn49) is an Asparagine amide.

As to expression, expressed by the venom gland.

It is found in the secreted. Its function is as follows. Potent anti-inflammatory agent. At low concentrations, mediates the degranulation of mast cells thus evoking an inflammatory response. Also acts as a neurotoxin capable of blocking a class of voltage-gated potassium channels. In Apis mellifera (Honeybee), this protein is Mast cell degranulating peptide.